The following is a 137-amino-acid chain: Large ribosomal subunit protein uL16 (137 aa).

The protein belongs to the universal ribosomal protein uL16 family. Part of the 50S ribosomal subunit.

Binds 23S rRNA and is also seen to make contacts with the A and possibly P site tRNAs. The sequence is that of Large ribosomal subunit protein uL16 from Streptococcus equi subsp. zooepidemicus (strain H70).